A 575-amino-acid polypeptide reads, in one-letter code: Septation ring formation regulator EzrA (575 aa).

Residues 1–8 (MSNGQLIY) lie on the Extracellular side of the membrane. A helical membrane pass occupies residues 9 to 27 (LMVAIAVILVLAYVVAIFL). The Cytoplasmic portion of the chain corresponds to 28–575 (RKRNEGRLEA…YEKTRETIRF (548 aa)). Coiled-coil stretches lie at residues 105–191 (LKAS…FVTL), 265–301 (LYEA…LYDI), 354–416 (VRRI…IEKD), and 456–526 (TASN…IQEA).

Belongs to the EzrA family.

It is found in the cell membrane. In terms of biological role, negative regulator of FtsZ ring formation; modulates the frequency and position of FtsZ ring formation. Inhibits FtsZ ring formation at polar sites. Interacts either with FtsZ or with one of its binding partners to promote depolymerization. The protein is Septation ring formation regulator EzrA of Streptococcus pneumoniae (strain ATCC BAA-255 / R6).